A 405-amino-acid polypeptide reads, in one-letter code: 3-isopropylmalate dehydrogenase 2, chloroplastic (405 aa).

The transit peptide at 1–33 directs the protein to the chloroplast; sequence MAAALQTNIRTVKVPATFRAVSKQSLAPFRVRC. The residue at position 70 (S70) is a Phosphoserine. 114–129 is a binding site for NAD(+); sequence IGGYKWDNNEKHLRPE. Residues R136, R146, and R174 each contribute to the substrate site. N234 lines the NAD(+) pocket. Position 264 (D264) interacts with substrate. D264 contributes to the Mg(2+) binding site. N265 contacts NAD(+). 2 residues coordinate Mg(2+): D288 and D292. Position 318 to 334 (318 to 334) interacts with NAD(+); it reads EPIHGSAPDIAGQDKAN.

This sequence belongs to the isocitrate and isopropylmalate dehydrogenases family. In terms of assembly, homodimer. The cofactor is Mg(2+). Mn(2+) is required as a cofactor. Expressed at low levels in seedlings, cotyledons, hypocotyls, flowers, roots, pollen, leaves and stems.

The protein localises to the plastid. Its subcellular location is the chloroplast stroma. It catalyses the reaction (2R,3S)-3-isopropylmalate + NAD(+) = 4-methyl-2-oxopentanoate + CO2 + NADH. It functions in the pathway amino-acid biosynthesis; L-leucine biosynthesis; L-leucine from 3-methyl-2-oxobutanoate: step 3/4. With respect to regulation, regulated by a thiol-based redox modification. Functionally, involved in leucine biosynthesis; catalyzes the oxidative decarboxylation step in leucine biosynthesis (primary metabolism). Catalyzes the oxidation of 3-carboxy-2-hydroxy-4-methylpentanoate (3-isopropylmalate, 3-IPM) to 3-carboxy-4-methyl-2-oxopentanoate. The product decarboxylates to 4-methyl-2 oxopentanoate. Required during pollen development and involved in embryo sac development. The polypeptide is 3-isopropylmalate dehydrogenase 2, chloroplastic (Arabidopsis thaliana (Mouse-ear cress)).